We begin with the raw amino-acid sequence, 619 residues long: Zinc finger CCCH domain-containing protein 67 (619 aa).

ANK repeat units lie at residues 52-81 (EPLT…LVDP) and 88-120 (SLST…DPAL). 2 consecutive C3H1-type zinc fingers follow at residues 213 to 241 (HYSC…HGVF) and 249 to 273 (QYRT…HTPD). Residues 308–341 (SPGSSSFTPPLSPSAGGGGGGGGGSGGGGAWPQQ) are disordered. Residues 322-337 (AGGGGGGGGGSGGGGA) show a composition bias toward gly residues.

The sequence is that of Zinc finger CCCH domain-containing protein 67 from Oryza sativa subsp. japonica (Rice).